Consider the following 250-residue polypeptide: Troponin I 1 (250 aa).

Disordered stretches follow at residues 1-59 and 194-250; these read MSQI…ERKK and SVFT…ADEE. 2 stretches are compositionally biased toward basic and acidic residues: residues 21–45 and 206–221; these read DAQR…EAGQ and DKPE…KEES. Over residues 229-250 the composition is skewed to acidic residues; the sequence is PVEEEETAASEGEEEEEEADEE.

Belongs to the troponin I family. As to expression, strongly expressed in body wall muscle during embryogenesis, reduces during the larval stages to adult. In late-stage larvae and adults, expression is evident in the proximal gonad of both hermaphrodites and males.

Its function is as follows. Troponin I is the inhibitory subunit of troponin, the thin filament regulatory complex which confers calcium-sensitivity to muscle actomyosin ATPase activity. This is Troponin I 1 (tni-1) from Caenorhabditis elegans.